A 408-amino-acid polypeptide reads, in one-letter code: WD repeat-containing protein JIP5 (408 aa).

6 WD repeats span residues 5–44, 50–86, 87–130, 133–172, 177–216, and 221–267; these read PVGSQIFDVVFHPSSAIAYTGLLNGHIKAFAYGEQGDSHN, PSKRSCRGLSLNGDGSKLYAVGKSKALHIVDTTTTDI, DARS…SVKT, QHFDYISDFLWLDDKKQLVATSGDGTLSVMDVRAKEPKVV, DQEDDLLSIVAIKSAQKILVGTQLGILSVFNRKKGWGDCV, and GHPL…FLGV. Residues 311–408 form a disordered region; sequence VDSDEEEDDE…VIDKDFFDGL (98 aa). Acidic residues-rich tracts occupy residues 313–339 and 356–366; these read SDEEEDDEEEWGGIEGADGSEGEEDEE and DESDDEDEEME. A compositionally biased stretch (basic and acidic residues) spans 396 to 408; the sequence is KETVIDKDFFDGL.

The protein belongs to the WD repeat WDR55 family.

The protein localises to the nucleus. Its subcellular location is the nucleolus. The sequence is that of WD repeat-containing protein JIP5 (JIP5) from Coprinopsis cinerea (strain Okayama-7 / 130 / ATCC MYA-4618 / FGSC 9003) (Inky cap fungus).